Consider the following 475-residue polypeptide: MPVQHVKLARDRRKKRAYIKVGVFFVAILLILTGILLTIKSKPEENSIFSTFDSGEYHELNTSPNENSTALQPDENATSYDDELQAKDDEVDEVKLSSDDLDTLPQHAQDALNGLLDAADQAIRITDQFSYTVTEGDTLKDVLVLSGLDDSSVQPLIALDPELAHLKAGQQFYWILDKNDNLEYLNWLVSEKEERIYERLEDGKFKRQVIEKKSIWRKEVLKGEIQNSLNSSLREKGLDTRQISQLSNALQWQVSLRKLKKGTQFAILVSREYLGDKLTGQGNVEALRISSGGKNYYAVQAANGRYYNQQGETLGKGFARYPLQRQARVSSPFNPNRRHPVTGRIRPHKGVDFSVSQGTPVIAPADGTVEKVAYQAGGAGRYVMLRHGREYQTVYMHLSKSLVKAGQTVKKGERIALSGNTGISTGPHLHYEFHINGRAVNPLTVKLPGTSSGMTSAERKQFLVRVREAERMLKP.

The helical transmembrane segment at 19-39 (IKVGVFFVAILLILTGILLTI) threads the bilayer. Disordered regions lie at residues 55-79 (GEYHELNTSPNENSTALQPDENATS) and 330-350 (SSPFNPNRRHPVTGRIRPHKG). The segment covering 60 to 79 (LNTSPNENSTALQPDENATS) has biased composition (polar residues). Over residues 336-348 (NRRHPVTGRIRPH) the composition is skewed to basic residues. Histidine 348 contacts Zn(2+).

The protein in the central section; belongs to the OapA family. It in the C-terminal section; belongs to the peptidase M23B family. Requires Zn(2+) as cofactor.

It localises to the cell membrane. This is an uncharacterized protein from Haemophilus influenzae (strain ATCC 51907 / DSM 11121 / KW20 / Rd).